A 238-amino-acid chain; its full sequence is Purine nucleoside phosphorylase DeoD-type (238 aa).

His-4 serves as a coordination point for a purine D-ribonucleoside. Phosphate-binding positions include Gly-20, Arg-24, Arg-43, and 87-90 (RIGS). Residues 181–183 (EME) and 205–206 (SD) contribute to the a purine D-ribonucleoside site. Catalysis depends on Asp-206, which acts as the Proton donor.

This sequence belongs to the PNP/UDP phosphorylase family. Homohexamer; trimer of homodimers.

It catalyses the reaction a purine D-ribonucleoside + phosphate = a purine nucleobase + alpha-D-ribose 1-phosphate. The catalysed reaction is a purine 2'-deoxy-D-ribonucleoside + phosphate = a purine nucleobase + 2-deoxy-alpha-D-ribose 1-phosphate. Catalyzes the reversible phosphorolytic breakdown of the N-glycosidic bond in the beta-(deoxy)ribonucleoside molecules, with the formation of the corresponding free purine bases and pentose-1-phosphate. This chain is Purine nucleoside phosphorylase DeoD-type, found in Mycoplasma genitalium (strain ATCC 33530 / DSM 19775 / NCTC 10195 / G37) (Mycoplasmoides genitalium).